Here is a 466-residue protein sequence, read N- to C-terminus: MEGKIIQVLGPVVDVEFESYLPAIFEALDINFEVNGVQKSLVLEVAAHLGGNRVRAIAMDMTEGLVRNQIVKARGKMIEVPVGEEVLGRIFNVVGESIDNLEPLKPSLTWPIHRKAPSFEQQSTKTEMFETGIKVIDLLAPYSKGGKVGLFGGAGVGKTVIIMELIHNVAYKHNGYSVFAGVGERTREGNDLYFEMKEGGVLDKVALCYGQMNEPPGARNRIAFTGLTMAEYFRDEKGLDVLMFIDNIFRYAQSGAEMSALLGRIPSAVGYQPTLAGEMGKLQERIASTKNGSITSVQAVYVPADDLTDPAPASVFAHLDATTVLNRKIAEKGIYPAVDPLDSTSRILSPQMIGEKHYEIATGIQQVLQKYKDLQDIIAILGLDELSEEDKKIVERARKIEKFLSQPFFVAEVFTGSPGKYVTLQETLEGFGGILEGKYDHIPENAFYMVGSIQEVLEKAKNMKNS.

152–159 (GGAGVGKT) contributes to the ATP binding site.

It belongs to the ATPase alpha/beta chains family. In terms of assembly, F-type ATPases have 2 components, CF(1) - the catalytic core - and CF(0) - the membrane proton channel. CF(1) has five subunits: alpha(3), beta(3), gamma(1), delta(1), epsilon(1). CF(0) has three main subunits: a(1), b(2) and c(9-12). The alpha and beta chains form an alternating ring which encloses part of the gamma chain. CF(1) is attached to CF(0) by a central stalk formed by the gamma and epsilon chains, while a peripheral stalk is formed by the delta and b chains.

It is found in the cell inner membrane. It carries out the reaction ATP + H2O + 4 H(+)(in) = ADP + phosphate + 5 H(+)(out). Functionally, produces ATP from ADP in the presence of a proton gradient across the membrane. The catalytic sites are hosted primarily by the beta subunits. The protein is ATP synthase subunit beta of Helicobacter pylori (strain HPAG1).